The primary structure comprises 439 residues: Phosphomethylpyrimidine synthase (439 aa).

Substrate is bound by residues N67, M96, Y126, H165, 187–189, 228–231, and E267; these read SRG and DSLR. H271 is a Zn(2+) binding site. Y294 contributes to the substrate binding site. H335 contacts Zn(2+). Residues C411, C414, and C418 each contribute to the [4Fe-4S] cluster site.

This sequence belongs to the ThiC family. The cofactor is [4Fe-4S] cluster.

The catalysed reaction is 5-amino-1-(5-phospho-beta-D-ribosyl)imidazole + S-adenosyl-L-methionine = 4-amino-2-methyl-5-(phosphooxymethyl)pyrimidine + CO + 5'-deoxyadenosine + formate + L-methionine + 3 H(+). It functions in the pathway cofactor biosynthesis; thiamine diphosphate biosynthesis. Functionally, catalyzes the synthesis of the hydroxymethylpyrimidine phosphate (HMP-P) moiety of thiamine from aminoimidazole ribotide (AIR) in a radical S-adenosyl-L-methionine (SAM)-dependent reaction. In Ignicoccus hospitalis (strain KIN4/I / DSM 18386 / JCM 14125), this protein is Phosphomethylpyrimidine synthase.